Reading from the N-terminus, the 369-residue chain is Aminomethyltransferase (369 aa).

The protein belongs to the GcvT family. In terms of assembly, the glycine cleavage system is composed of four proteins: P, T, L and H.

It carries out the reaction N(6)-[(R)-S(8)-aminomethyldihydrolipoyl]-L-lysyl-[protein] + (6S)-5,6,7,8-tetrahydrofolate = N(6)-[(R)-dihydrolipoyl]-L-lysyl-[protein] + (6R)-5,10-methylene-5,6,7,8-tetrahydrofolate + NH4(+). Functionally, the glycine cleavage system catalyzes the degradation of glycine. The protein is Aminomethyltransferase of Xanthomonas euvesicatoria pv. vesicatoria (strain 85-10) (Xanthomonas campestris pv. vesicatoria).